A 137-amino-acid chain; its full sequence is Putative pre-16S rRNA nuclease (137 aa).

This sequence belongs to the YqgF nuclease family.

It is found in the cytoplasm. Its function is as follows. Could be a nuclease involved in processing of the 5'-end of pre-16S rRNA. This Anaeromyxobacter dehalogenans (strain 2CP-1 / ATCC BAA-258) protein is Putative pre-16S rRNA nuclease.